Consider the following 1317-residue polypeptide: Kinesin-like protein KIF16B (1317 aa).

One can recognise a Kinesin motor domain in the interval 3–358; it reads SVKVAVRVRP…LRYANRAKNI (356 aa). Residue 102–109 coordinates ATP; it reads GQTGSGKS. Positions 370-425 form a coiled coil; sequence VKLIRELRAEIARLKTLLAQGNQIALLDSPTALSMEEKLQQNEARVQELTKEWTNK. Position 398 is a phosphoserine (S398). The 52-residue stretch at 478 to 529 folds into the FHA domain; it reads TYVGRDDASTEQDIVLHGLDLESEHCIFENIGGTVTLIPLSGSQCSVNGVQI. T577 carries the post-translational modification Phosphothreonine. A Phosphoserine modification is found at S582. Coiled-coil stretches lie at residues 595–882 and 936–1087; these read GLEF…DESV and LSLD…VQKD. The segment covering 1036 to 1048 has biased composition (polar residues); it reads LASLNSGSREQSG. The segment at 1036-1057 is disordered; the sequence is LASLNSGSREQSGLQASLEAEQ. Phosphoserine is present on S1052. Positions 1182-1296 constitute a PX domain; it reads DPIKISIPRY…KVGLTLSKHT (115 aa).

Belongs to the TRAFAC class myosin-kinesin ATPase superfamily. Kinesin family. Interacts with RAB14. Interacts with PTPN21. In terms of tissue distribution, primarily expressed in brain. Also present in kidney, liver, intestine, placenta, leukocytes, heart and skeletal muscle (at protein level).

The protein resides in the cytoplasm. It is found in the cytoskeleton. It localises to the early endosome membrane. The protein localises to the spindle. Plus end-directed microtubule-dependent motor protein involved in endosome transport and receptor recycling and degradation. Regulates the plus end motility of early endosomes and the balance between recycling and degradation of receptors such as EGF receptor (EGFR) and FGF receptor (FGFR). Regulates the Golgi to endosome transport of FGFR-containing vesicles during early development, a key process for developing basement membrane and epiblast and primitive endoderm lineages during early postimplantation development. This Homo sapiens (Human) protein is Kinesin-like protein KIF16B (KIF16B).